The chain runs to 195 residues: Imidazole glycerol phosphate synthase subunit HisH 2 (195 aa).

Residues 2-195 (KIIIIDTACA…LISNFIKDIG (194 aa)) enclose the Glutamine amidotransferase type-1 domain. C77 serves as the catalytic Nucleophile. Residues H175 and E177 contribute to the active site.

As to quaternary structure, heterodimer of HisH and HisF.

The protein resides in the cytoplasm. The catalysed reaction is 5-[(5-phospho-1-deoxy-D-ribulos-1-ylimino)methylamino]-1-(5-phospho-beta-D-ribosyl)imidazole-4-carboxamide + L-glutamine = D-erythro-1-(imidazol-4-yl)glycerol 3-phosphate + 5-amino-1-(5-phospho-beta-D-ribosyl)imidazole-4-carboxamide + L-glutamate + H(+). The enzyme catalyses L-glutamine + H2O = L-glutamate + NH4(+). The protein operates within amino-acid biosynthesis; L-histidine biosynthesis; L-histidine from 5-phospho-alpha-D-ribose 1-diphosphate: step 5/9. Functionally, IGPS catalyzes the conversion of PRFAR and glutamine to IGP, AICAR and glutamate. The HisH subunit provides the glutamine amidotransferase activity that produces the ammonia necessary to HisF for the synthesis of IGP and AICAR. The polypeptide is Imidazole glycerol phosphate synthase subunit HisH 2 (hisH2) (Campylobacter jejuni subsp. jejuni serotype O:2 (strain ATCC 700819 / NCTC 11168)).